Here is a 91-residue protein sequence, read N- to C-terminus: MPRSVWKGPFCDNYVIKLARRARGNPNVLIKIRSRRSVILPAFVGYTFGVYNGKVFIPVKVNENMVGHKFGEFSPTRTFNGHSGDRKVNKK.

This sequence belongs to the universal ribosomal protein uS19 family.

Protein S19 forms a complex with S13 that binds strongly to the 16S ribosomal RNA. This chain is Small ribosomal subunit protein uS19, found in Neorickettsia sennetsu (strain ATCC VR-367 / Miyayama) (Ehrlichia sennetsu).